A 339-amino-acid polypeptide reads, in one-letter code: Trace amine-associated receptor 2 (339 aa).

Residues 1-36 are Extracellular-facing; that stretch reads MTSFEAQQETFDCSEYGNGSCPENERSLGVRAAMYS. N-linked (GlcNAc...) asparagine glycosylation is present at N18. 2 disulfide bridges follow: C21–C185 and C104–C189. Residues 37–57 form a helical membrane-spanning segment; it reads LMAGAIFITIFGNLVMIISIS. Residues 58–67 are Cytoplasmic-facing; sequence YFKQLHTPTN. Residues 68 to 88 traverse the membrane as a helical segment; sequence LLILSMAVTDFLLGFTIMPYS. The Extracellular segment spans residues 89–106; that stretch reads MVRSVENCWYFGLTFCKI. The helical transmembrane segment at 107-127 threads the bilayer; sequence HYSFDLMLSITSIFHLCSVAI. Residues 128 to 150 are Cytoplasmic-facing; sequence DRFYAICHPLHYCTKMTIPVVKR. A helical membrane pass occupies residues 151–171; the sequence is LLLVCWSVPGAFAFGVVFSEA. Over 172 to 195 the chain is Extracellular; that stretch reads YADGIEGYDILVACSSSCPVMFNK. A helical transmembrane segment spans residues 196 to 216; that stretch reads LWGTTLFVAGFFTPSSMMVGI. At 217-251 the chain is on the cytoplasmic side; sequence YGKIFAVSKKHARVIDNLPENQNNQMRKDKKAAKT. A helical transmembrane segment spans residues 252 to 272; it reads LGIVMGVFLLCWFPCFFTILL. Residues 273 to 287 lie on the Extracellular side of the membrane; it reads DPFLNFSTPAILFDA. N277 carries N-linked (GlcNAc...) asparagine glycosylation. Residues 288–310 traverse the membrane as a helical segment; the sequence is LTWFGYFNSTCNPLIYGFFYPWF. Topologically, residues 311 to 339 are cytoplasmic; it reads RRALRYILLGKIFSSHFHNTNLFTQKETE.

It belongs to the G-protein coupled receptor 1 family.

It localises to the cell membrane. Functionally, orphan olfactory receptor specific for trace amines. Trace amine compounds are enriched in animal body fluids and act on trace amine-associated receptors (TAARs) to elicit both intraspecific and interspecific innate behaviors. Ligand-binding causes a conformation change that triggers signaling via the G(s)-class of G-proteins which activate adenylate cyclase. May also be required to provide olfactory input into limbic brain areas to regulate emotional behaviors likely via modulation of the dopamine system. This chain is Trace amine-associated receptor 2 (Taar2), found in Rattus norvegicus (Rat).